We begin with the raw amino-acid sequence, 266 residues long: Protein phosphatase 1 regulatory subunit 35 (266 aa).

Positions 1–10 (MMVYNGSQLE) are enriched in polar residues. A disordered region spans residues 1–118 (MMVYNGSQLE…QDLGTPVQQS (118 aa)). The segment covering 21–38 (PGPPPEPRAPEPGAPVPE) has biased composition (pro residues). 2 positions are modified to phosphoserine: serine 46 and serine 51. A compositionally biased stretch (basic residues) spans 62-79 (GRRKGRADRRGGARKGRQ). The segment covering 86–97 (PPSPVRSGPPPA) has biased composition (pro residues).

It belongs to the PPP1R35 family. As to quaternary structure, interacts with PPP1CA; this interaction mediates the PPP1CA phosphatase activity inhibition. Interacts with RTTN; this interaction allows the mutual recruitment to the centriole.

Its subcellular location is the cytoplasm. It localises to the cytoskeleton. The protein resides in the microtubule organizing center. It is found in the centrosome. The protein localises to the centriole. Its function is as follows. During centriole duplication, plays a role in the centriole elongation by promoting the recruitment of the microtubule-binding elongation machinery through its interaction with RTTN, leading to the centriole to centrosome conversion. In addition may play a role in the primary cilia assembly. The chain is Protein phosphatase 1 regulatory subunit 35 from Bos taurus (Bovine).